Reading from the N-terminus, the 381-residue chain is Opsin Rh2 (381 aa).

Residues 1-56 (MERSLLPEPPLAMALLGPRFEAQTGGNRSVLDNVLPDMAPLVNPYWSRFAPMDPTM) lie on the Extracellular side of the membrane. N-linked (GlcNAc...) asparagine glycosylation occurs at Asn-27. The helical transmembrane segment at 57 to 81 (SKILGLFTLVILIISCCGNGVVVYI) threads the bilayer. Over 82-93 (FGGTKSLRTPAN) the chain is Cytoplasmic. A helical transmembrane segment spans residues 94-119 (LLVLNLAFSDFCMMASQSPVMIINFY). Residues 120–133 (YETWVLGPLWCDIY) are Extracellular-facing. Cys-130 and Cys-207 form a disulfide bridge. A helical transmembrane segment spans residues 134-153 (AACGSLFGCVSIWSMCMIAF). The Cytoplasmic segment spans residues 154 to 172 (DRYNVIVKGINGTPMTIKT). Residues 173–196 (SIMKIAFIWMMAVFWTIMPLIGWS) traverse the membrane as a helical segment. Over 197–220 (SYVPEGNLTACSIDYMTRQWNPRS) the chain is Extracellular. The helical transmembrane segment at 221-248 (YLITYSLFVYYTPLFMICYSYWFIIATV) threads the bilayer. Residues 249–283 (AAHEKAMRDQAKKMNVKSLRSSEDCDKSAENKLAK) are Cytoplasmic-facing. The chain crosses the membrane as a helical span at residues 284–307 (VALTTISLWFMAWTPYLIICYFGL). Topologically, residues 308–314 (FKIDGLT) are extracellular. The helical transmembrane segment at 315–339 (PLTTIWGATFAKTSAVYNPIVYGIS) threads the bilayer. Lys-326 carries the N6-(retinylidene)lysine modification. Topologically, residues 340 to 381 (HPKYRLVLKEKCPMCVCGSTDEPKPDAPPSDTETTSEAESKA) are cytoplasmic. Residues 358–381 (STDEPKPDAPPSDTETTSEAESKA) form a disordered region. Positions 370–381 (DTETTSEAESKA) are enriched in polar residues.

The protein belongs to the G-protein coupled receptor 1 family. Opsin subfamily. In terms of processing, some or all of the Ser/Thr residues present in the C-terminal part may be phosphorylated.

The protein localises to the membrane. Functionally, visual pigments are the light-absorbing molecules that mediate vision. They consist of an apoprotein, opsin, covalently linked to cis-retinal. This chain is Opsin Rh2 (Rh2), found in Drosophila pseudoobscura pseudoobscura (Fruit fly).